The following is a 701-amino-acid chain: MNPVIKTFQFGQSTVTLETGRIARQATGAVLVTVDNDVTVLVTVVGAKQADPGKGFFPLSVHYQEKTYAAGKIPGGFFKREGRPSEKETLTSRLIDRPIRPLFPEGFMNEVQVVCTVVSTSKKTDPDIAAMIGTSAALAISGIPFEGPIGAARVAFHESTGYLLNPTYEQLAASSLDMVVAGTADAVLMVESEAQELTEDQMLGAVLFAHDEFQAVIQAVKELAAEAAKPTWDWKPAVANTELFNAIRAEFGEAVSQGYTITVKADRYARLGELRDQAIAKFSGEEGQPSASEVKEIFGEIEYRTVRENIVNGKPRIDGRDTKTVRPLNIEVGVLPKTHGSALFTRGETQALVVATLGTARDAQLLDTLEGEKKDPFMLHYNFPPFSVGECGRMGGAGRREIGHGRLARRSVQAMLPAADVFPYTIRVVSEITESNGSSSMASVCGASLALMDAGVPMKAPVAGIAMGLVKEGEKFAVLTDILGDEDHLGDMDFKVAGTAKGVTALQMDIKINGITEEIMEIALGQALEARLNILGQMNQIIGQSRTELSANAPTMIAMKIDTDKIRDVIGKGGATIRAICEETKASIDIEDDGSIKIFGETKEAAEAAKQRILGITAEAEIGKIYVGKVERIVDFGAFVNILPGKDGLVHISMLSDARVEKVTDILKEGQEVEVLVLDVDNRGRIKLSIKDVAAAKASGV.

2 residues coordinate Mg(2+): Asp487 and Asp493. Residues 554–613 (PTMIAMKIDTDKIRDVIGKGGATIRAICEETKASIDIEDDGSIKIFGETKEAAEAAKQRI) enclose the KH domain. Residues 623–691 (GKIYVGKVER…NRGRIKLSIK (69 aa)) form the S1 motif domain.

This sequence belongs to the polyribonucleotide nucleotidyltransferase family. As to quaternary structure, component of the RNA degradosome, which is a multiprotein complex involved in RNA processing and mRNA degradation. Mg(2+) is required as a cofactor.

The protein localises to the cytoplasm. The catalysed reaction is RNA(n+1) + phosphate = RNA(n) + a ribonucleoside 5'-diphosphate. Involved in mRNA degradation. Catalyzes the phosphorolysis of single-stranded polyribonucleotides processively in the 3'- to 5'-direction. This chain is Polyribonucleotide nucleotidyltransferase, found in Pseudomonas putida (strain GB-1).